Consider the following 345-residue polypeptide: Gibberellin 2-beta-dioxygenase 2 (345 aa).

The Fe2OG dioxygenase domain occupies 170–285 (HSDSLLRINH…RMSMMYFAAP (116 aa)). 3 residues coordinate Fe cation: H209, D211, and H266. R276 is a catalytic residue.

It belongs to the iron/ascorbate-dependent oxidoreductase family. GA2OX subfamily. The cofactor is Fe cation. As to expression, predominantly expressed in leaves.

The catalysed reaction is gibberellin A1 + 2-oxoglutarate + O2 = gibberellin A8 + succinate + CO2. The protein operates within plant hormone biosynthesis; gibberellin biosynthesis. Functionally, catalyzes the 2-beta-hydroxylation of several biologically active gibberellins, leading to the homeostatic regulation of their endogenous level. Catabolism of gibberellins (GAs) plays a central role in plant development. Converts GA9/GA20 to GA51/GA29 and GA4/GA1 to GA34/GA8. In Pisum sativum (Garden pea), this protein is Gibberellin 2-beta-dioxygenase 2 (GA2OX2).